The following is a 274-amino-acid chain: Putative outer membrane protein CPn_1073/CP_0776/CPj1073/CpB1118 (274 aa).

The N-terminal stretch at 1–21 (MRRYLFMVLALCLYRAAPLEA) is a signal peptide.

It is found in the cell outer membrane. This Chlamydia pneumoniae (Chlamydophila pneumoniae) protein is Putative outer membrane protein CPn_1073/CP_0776/CPj1073/CpB1118.